The chain runs to 101 residues: UPF0235 protein SG2030 (101 aa).

The protein belongs to the UPF0235 family.

The protein is UPF0235 protein SG2030 of Sodalis glossinidius (strain morsitans).